A 263-amino-acid chain; its full sequence is Probable elongation factor 1-beta/1-delta 2 (263 aa).

Residue Ser-2 is modified to N-acetylserine. Residues 112 to 153 (QGQTSSVAAPAAAPAAAKEEAAGDDDFDLFGSEDEEEDEEKK) form a disordered region. The segment covering 133–150 (AGDDDFDLFGSEDEEEDE) has biased composition (acidic residues).

This sequence belongs to the EF-1-beta/EF-1-delta family. As to quaternary structure, EF-1 is composed of 4 subunits: alpha, beta, delta, and gamma.

Functionally, EF-1-beta and EF-1-delta stimulate the exchange of GDP bound to EF-1-alpha to GTP. In Caenorhabditis elegans, this protein is Probable elongation factor 1-beta/1-delta 2.